The following is a 459-amino-acid chain: Bifunctional protein GlmU (459 aa).

Residues 1 to 230 (MVKRYAVILA…FEETIGVNDR (230 aa)) are pyrophosphorylase. Residues 9 to 12 (LAAG), Lys23, Gln73, and 78 to 79 (GT) each bind UDP-N-acetyl-alpha-D-glucosamine. A Mg(2+)-binding site is contributed by Asp103. Gly140, Glu155, Asn170, and Asn228 together coordinate UDP-N-acetyl-alpha-D-glucosamine. Residue Asn228 coordinates Mg(2+). The tract at residues 231-251 (VALAEAEKIMRERICRKHMMN) is linker. Residues 252 to 459 (GVTIIDPAHT…VDRLSIKKNS (208 aa)) are N-acetyltransferase. Residues Arg333 and Lys351 each contribute to the UDP-N-acetyl-alpha-D-glucosamine site. His363 (proton acceptor) is an active-site residue. UDP-N-acetyl-alpha-D-glucosamine is bound by residues Tyr366 and Asn377. Acetyl-CoA is bound by residues 386–387 (NY), Ala423, and Arg440.

This sequence in the N-terminal section; belongs to the N-acetylglucosamine-1-phosphate uridyltransferase family. In the C-terminal section; belongs to the transferase hexapeptide repeat family. In terms of assembly, homotrimer. It depends on Mg(2+) as a cofactor.

Its subcellular location is the cytoplasm. It carries out the reaction alpha-D-glucosamine 1-phosphate + acetyl-CoA = N-acetyl-alpha-D-glucosamine 1-phosphate + CoA + H(+). The catalysed reaction is N-acetyl-alpha-D-glucosamine 1-phosphate + UTP + H(+) = UDP-N-acetyl-alpha-D-glucosamine + diphosphate. It functions in the pathway nucleotide-sugar biosynthesis; UDP-N-acetyl-alpha-D-glucosamine biosynthesis; N-acetyl-alpha-D-glucosamine 1-phosphate from alpha-D-glucosamine 6-phosphate (route II): step 2/2. It participates in nucleotide-sugar biosynthesis; UDP-N-acetyl-alpha-D-glucosamine biosynthesis; UDP-N-acetyl-alpha-D-glucosamine from N-acetyl-alpha-D-glucosamine 1-phosphate: step 1/1. Its pathway is bacterial outer membrane biogenesis; LPS lipid A biosynthesis. In terms of biological role, catalyzes the last two sequential reactions in the de novo biosynthetic pathway for UDP-N-acetylglucosamine (UDP-GlcNAc). The C-terminal domain catalyzes the transfer of acetyl group from acetyl coenzyme A to glucosamine-1-phosphate (GlcN-1-P) to produce N-acetylglucosamine-1-phosphate (GlcNAc-1-P), which is converted into UDP-GlcNAc by the transfer of uridine 5-monophosphate (from uridine 5-triphosphate), a reaction catalyzed by the N-terminal domain. This Geobacillus sp. (strain WCH70) protein is Bifunctional protein GlmU.